A 700-amino-acid polypeptide reads, in one-letter code: Receptor-type tyrosine-protein phosphatase epsilon (700 aa).

The signal sequence occupies residues 1 to 19 (MEPLCPLLLVGFSLPLARA). Over 20–46 (LRGNETTADSNETTTTSGPPDPGASQP) the chain is Extracellular. N-linked (GlcNAc...) asparagine glycosylation is found at Asn-23 and Asn-30. Residues 47-69 (LLAWLLLPLLLLLLVLLLAAYFF) traverse the membrane as a helical segment. The Cytoplasmic segment spans residues 70–700 (RFRKQRKAVV…DIFSDYANFK (631 aa)). 2 consecutive Tyrosine-protein phosphatase domains span residues 135-394 (FREE…LLEY) and 426-689 (LEEE…VQDF). Residues Asp-303, 335–341 (CSAGVGR), and Gln-379 each bind substrate. Cys-335 (phosphocysteine intermediate) is an active-site residue. The active-site Phosphocysteine intermediate is Cys-630. Tyr-696 is modified (phosphotyrosine).

The protein belongs to the protein-tyrosine phosphatase family. Receptor class 4 subfamily. As to quaternary structure, monomer. Isoform 2: Homodimer. Can form oligomers. Dimerization is increased by oxidative stress and decreased by EGFR. Isoform 2 interacts with GRB2. Post-translationally, a catalytically active cytoplasmic form (p65) is produced by proteolytic cleavage of either isoform 1, isoform 2 or isoform 3. Isoform 1 and isoform 2 are phosphorylated on tyrosine residues by tyrosine kinase Neu. In terms of processing, isoform 1 is glycosylated. In terms of tissue distribution, expressed in giant cell tumor (osteoclastoma rich in multinucleated osteoclastic cells).

The protein localises to the cell membrane. It is found in the cytoplasm. The enzyme catalyses O-phospho-L-tyrosyl-[protein] + H2O = L-tyrosyl-[protein] + phosphate. Its function is as follows. Isoform 1 plays a critical role in signaling transduction pathways and phosphoprotein network topology in red blood cells. May play a role in osteoclast formation and function. In terms of biological role, isoform 2 acts as a negative regulator of insulin receptor (IR) signaling in skeletal muscle. Regulates insulin-induced tyrosine phosphorylation of insulin receptor (IR) and insulin receptor substrate 1 (IRS-1), phosphorylation of protein kinase B and glycogen synthase kinase-3 and insulin induced stimulation of glucose uptake. Isoform 1 and isoform 2 act as a negative regulator of FceRI-mediated signal transduction leading to cytokine production and degranulation, most likely by acting at the level of SYK to affect downstream events such as phosphorylation of SLP76 and LAT and mobilization of Ca(2+). This chain is Receptor-type tyrosine-protein phosphatase epsilon (PTPRE), found in Homo sapiens (Human).